Consider the following 99-residue polypeptide: Beta-2-microglobulin (99 aa).

The 89-residue stretch at 5-93 (PRVQVYSRHP…HITLSEPKIV (89 aa)) folds into the Ig-like C1-type domain. A disulfide bond links Cys-25 and Cys-80.

Belongs to the beta-2-microglobulin family. Heterodimer of an alpha chain and a beta chain. Beta-2-microglobulin is the beta-chain of major histocompatibility complex class I molecules.

It localises to the secreted. Its function is as follows. Component of the class I major histocompatibility complex (MHC). Involved in the presentation of peptide antigens to the immune system. The protein is Beta-2-microglobulin (B2M) of Cavia porcellus (Guinea pig).